Here is a 190-residue protein sequence, read N- to C-terminus: MAQNGSESGSTLGGVAGRYASALFELAREERAVDAVSEGLDRFDALLKESADLQRLVRSPVFTSEDQVKAIDAVLARAGITGLAANFIRLSAANRRLFVLPDMIRAFRALVRESKGIVQAEVRLAETPSDAVLEEIKASLRDVARAEVDVDLRIDPSLIGGIVVKVGSRMVDASLRTKLNSIRLAMRDAR.

It belongs to the ATPase delta chain family. In terms of assembly, F-type ATPases have 2 components, F(1) - the catalytic core - and F(0) - the membrane proton channel. F(1) has five subunits: alpha(3), beta(3), gamma(1), delta(1), epsilon(1). F(0) has three main subunits: a(1), b(2) and c(10-14). The alpha and beta chains form an alternating ring which encloses part of the gamma chain. F(1) is attached to F(0) by a central stalk formed by the gamma and epsilon chains, while a peripheral stalk is formed by the delta and b chains.

The protein localises to the cell inner membrane. In terms of biological role, f(1)F(0) ATP synthase produces ATP from ADP in the presence of a proton or sodium gradient. F-type ATPases consist of two structural domains, F(1) containing the extramembraneous catalytic core and F(0) containing the membrane proton channel, linked together by a central stalk and a peripheral stalk. During catalysis, ATP synthesis in the catalytic domain of F(1) is coupled via a rotary mechanism of the central stalk subunits to proton translocation. This protein is part of the stalk that links CF(0) to CF(1). It either transmits conformational changes from CF(0) to CF(1) or is implicated in proton conduction. The polypeptide is ATP synthase subunit delta (Methylobacterium nodulans (strain LMG 21967 / CNCM I-2342 / ORS 2060)).